The chain runs to 101 residues: A-type ATP synthase subunit K (101 aa).

3 consecutive transmembrane segments (helical) span residues 5-25, 37-57, and 75-95; these read WLPF…AQAP, IGAG…VGMA, and ILIF…FAVL.

The protein belongs to the V-ATPase proteolipid subunit family. In terms of assembly, has multiple subunits with at least A(3), B(3), C, D, E, F, H, I and proteolipid K(x). In terms of processing, the N-terminus is blocked.

It localises to the cell membrane. In terms of biological role, component of the A-type ATP synthase that produces ATP from ADP in the presence of a proton gradient across the membrane. The chain is A-type ATP synthase subunit K from Sulfurisphaera tokodaii (strain DSM 16993 / JCM 10545 / NBRC 100140 / 7) (Sulfolobus tokodaii).